We begin with the raw amino-acid sequence, 283 residues long: Bis(5'-nucleosyl)-tetraphosphatase, symmetrical (283 aa).

This sequence belongs to the Ap4A hydrolase family.

The enzyme catalyses P(1),P(4)-bis(5'-adenosyl) tetraphosphate + H2O = 2 ADP + 2 H(+). Its function is as follows. Hydrolyzes diadenosine 5',5'''-P1,P4-tetraphosphate to yield ADP. The sequence is that of Bis(5'-nucleosyl)-tetraphosphatase, symmetrical from Cronobacter sakazakii (strain ATCC BAA-894) (Enterobacter sakazakii).